A 239-amino-acid chain; its full sequence is Flagellin B3 (239 aa).

A propeptide spanning residues 1-11 (MLKNFMKNKKG) is cleaved from the precursor. Asn115 and Asn128 each carry an N-linked (GlcNAc...) asparagine glycan.

This sequence belongs to the archaeal flagellin family. Post-translationally, N-linked glycans consist of the 779 Da trisaccharide beta-ManNAc(Thr)-(1-4)-beta-GlcNAc3NAcA-(1-3)-beta-GlcNAc.

The protein localises to the archaeal flagellum. In terms of biological role, flagellin is the subunit protein which polymerizes to form the filaments of archaeal flagella. The chain is Flagellin B3 (flaB3) from Methanococcus voltae.